The sequence spans 306 residues: Acetyl-coenzyme A carboxylase carboxyl transferase subunit beta (306 aa).

Residues 25-294 (LWIKDPTSGE…VFNPSDPSPT (270 aa)) form the CoA carboxyltransferase N-terminal domain. The tract at residues 286–306 (FNPSDPSPTDSQTSLSTTKAA) is disordered. Over residues 288-306 (PSDPSPTDSQTSLSTTKAA) the composition is skewed to low complexity.

This sequence belongs to the AccD/PCCB family. As to quaternary structure, acetyl-CoA carboxylase is a heterohexamer composed of biotin carboxyl carrier protein (AccB), biotin carboxylase (AccC) and two subunits each of ACCase subunit alpha (AccA) and ACCase subunit beta (AccD).

It is found in the cytoplasm. It catalyses the reaction N(6)-carboxybiotinyl-L-lysyl-[protein] + acetyl-CoA = N(6)-biotinyl-L-lysyl-[protein] + malonyl-CoA. The protein operates within lipid metabolism; malonyl-CoA biosynthesis; malonyl-CoA from acetyl-CoA: step 1/1. Component of the acetyl coenzyme A carboxylase (ACC) complex. Biotin carboxylase (BC) catalyzes the carboxylation of biotin on its carrier protein (BCCP) and then the CO(2) group is transferred by the transcarboxylase to acetyl-CoA to form malonyl-CoA. The chain is Acetyl-coenzyme A carboxylase carboxyl transferase subunit beta from Bartonella grahamii (strain as4aup).